We begin with the raw amino-acid sequence, 391 residues long: DNA primase small subunit PriS (391 aa).

Residues aspartate 98, aspartate 100, and aspartate 294 contribute to the active site.

Belongs to the eukaryotic-type primase small subunit family. As to quaternary structure, heterodimer of a small subunit (PriS) and a large subunit (PriL). Mg(2+) is required as a cofactor. It depends on Mn(2+) as a cofactor.

Its function is as follows. Catalytic subunit of DNA primase, an RNA polymerase that catalyzes the synthesis of short RNA molecules used as primers for DNA polymerase during DNA replication. The small subunit contains the primase catalytic core and has DNA synthesis activity on its own. Binding to the large subunit stabilizes and modulates the activity, increasing the rate of DNA synthesis while decreasing the length of the DNA fragments, and conferring RNA synthesis capability. The DNA polymerase activity may enable DNA primase to also catalyze primer extension after primer synthesis. May also play a role in DNA repair. In Halobacterium salinarum (strain ATCC 29341 / DSM 671 / R1), this protein is DNA primase small subunit PriS.